The chain runs to 96 residues: Dynein light chain roadblock-type 1 (96 aa).

A2 bears the N-acetylalanine mark.

The protein belongs to the GAMAD family. In terms of assembly, homodimer. The cytoplasmic dynein 1 complex consists of two catalytic heavy chains (HCs) and a number of non-catalytic subunits presented by intermediate chains (ICs), light intermediate chains (LICs) and light chains (LCs); the composition seems to vary in respect to the IC, LIC and LC composition. The heavy chain homodimer serves as a scaffold for the probable homodimeric assembly of the respective non-catalytic subunits. The ICs and LICs bind directly to the HC dimer and the LCs assemble on the IC dimer. Interacts with DYNLRB2. Interacts with DYNC1I1 and DYNC1I2. Interacts with RAB6A isoform 1 (GTP-bound); the interaction is direct. Interacts with RAB6A isoform 2 (GDP-bound); the interaction is direct. Interacts with RAB6B (GDP-bound).

The protein localises to the cytoplasm. It localises to the cytoskeleton. Acts as one of several non-catalytic accessory components of the cytoplasmic dynein 1 complex that are thought to be involved in linking dynein to cargos and to adapter proteins that regulate dynein function. Cytoplasmic dynein 1 acts as a motor for the intracellular retrograde motility of vesicles and organelles along microtubules. The sequence is that of Dynein light chain roadblock-type 1 (Dynlrb1) from Mus musculus (Mouse).